We begin with the raw amino-acid sequence, 460 residues long: tRNA(Ile)-lysidine synthase (460 aa).

37 to 42 contributes to the ATP binding site; it reads SGGADS.

This sequence belongs to the tRNA(Ile)-lysidine synthase family.

The protein resides in the cytoplasm. It carries out the reaction cytidine(34) in tRNA(Ile2) + L-lysine + ATP = lysidine(34) in tRNA(Ile2) + AMP + diphosphate + H(+). Its function is as follows. Ligates lysine onto the cytidine present at position 34 of the AUA codon-specific tRNA(Ile) that contains the anticodon CAU, in an ATP-dependent manner. Cytidine is converted to lysidine, thus changing the amino acid specificity of the tRNA from methionine to isoleucine. The sequence is that of tRNA(Ile)-lysidine synthase from Treponema denticola (strain ATCC 35405 / DSM 14222 / CIP 103919 / JCM 8153 / KCTC 15104).